Here is a 149-residue protein sequence, read N- to C-terminus: Envelope glycoprotein UL4 (149 aa).

An N-terminal signal peptide occupies residues 1 to 18; sequence MMLRTWISLPMVLLDAYC. 9 N-linked (GlcNAc...) asparagine; by host glycosylation sites follow: asparagine 46, asparagine 51, asparagine 59, asparagine 67, asparagine 105, asparagine 109, asparagine 119, asparagine 136, and asparagine 145.

The protein belongs to the RL11 family. N-glycosylated and possibly O-glycosylated.

It is found in the virion membrane. The polypeptide is Envelope glycoprotein UL4 (UL4) (Human cytomegalovirus (strain Merlin) (HHV-5)).